The chain runs to 236 residues: Probable glutathione S-transferase BZ2 (236 aa).

A GST N-terminal domain is found at 1 to 80 (MRVLGGEVSP…YIEDVARESG (80 aa)). Glutathione-binding positions include serine 9, lysine 37, isoleucine 51, and 64-65 (ES). Residues 92 to 221 (DPYERAMHRF…LPDTEKVVQF (130 aa)) enclose the GST C-terminal domain.

The protein belongs to the GST superfamily. HSP26 family.

The catalysed reaction is RX + glutathione = an S-substituted glutathione + a halide anion + H(+). The protein operates within pigment biosynthesis; anthocyanin biosynthesis. This chain is Probable glutathione S-transferase BZ2 (BZ2), found in Zea mays (Maize).